The sequence spans 160 residues: Flavodoxin (160 aa).

Residues 3-153 (ISILYSSKTG…NARIFGERIA (151 aa)) enclose the Flavodoxin-like domain.

The protein belongs to the flavodoxin family. Requires FMN as cofactor.

In terms of biological role, low-potential electron donor to a number of redox enzymes. The protein is Flavodoxin (floX) of Clostridium saccharobutylicum.